The following is a 445-amino-acid chain: NAD-specific glutamate dehydrogenase (445 aa).

Residue lysine 124 is part of the active site.

Belongs to the Glu/Leu/Phe/Val dehydrogenases family. In terms of assembly, homohexamer.

The protein resides in the cell surface. The catalysed reaction is L-glutamate + NAD(+) + H2O = 2-oxoglutarate + NH4(+) + NADH + H(+). Probably involved in degradation rather than biosynthesis of glutamate. The protein is NAD-specific glutamate dehydrogenase (gdh) of Porphyromonas gingivalis (strain ATCC 33277 / DSM 20709 / CIP 103683 / JCM 12257 / NCTC 11834 / 2561).